A 1066-amino-acid chain; its full sequence is Beta-galactosidase (1066 aa).

Residues asparagine 110 and aspartate 209 each coordinate substrate. Aspartate 209 is a Na(+) binding site. The Mg(2+) site is built by glutamate 432, histidine 434, and glutamate 477. Substrate is bound by residues glutamate 477 and 553 to 556 (EYAH). The active-site Proton donor is glutamate 477. The active-site Nucleophile is glutamate 553. Asparagine 613 provides a ligand contact to Mg(2+). Phenylalanine 617 and asparagine 620 together coordinate Na(+). 2 residues coordinate substrate: asparagine 620 and tryptophan 1041.

It belongs to the glycosyl hydrolase 2 family. As to quaternary structure, homotetramer. It depends on Mg(2+) as a cofactor. Na(+) is required as a cofactor.

It catalyses the reaction Hydrolysis of terminal non-reducing beta-D-galactose residues in beta-D-galactosides.. This chain is Beta-galactosidase, found in Yersinia pseudotuberculosis serotype O:1b (strain IP 31758).